We begin with the raw amino-acid sequence, 97 residues long: uncharacterized protein (97 aa).

3 helical membrane-spanning segments follow: residues 5–25, 27–47, and 77–97; these read TLVAIVVFFGNGEPFHVSLSV, MVFVLLLSSTRIHEVVVLICY, and IISINDICIYGCIALTVVFIL.

The protein resides in the membrane. This is an uncharacterized protein from Saccharomyces cerevisiae (strain ATCC 204508 / S288c) (Baker's yeast).